The chain runs to 675 residues: DNA ligase (675 aa).

NAD(+)-binding positions include 35–39 (DEAYD), 84–85 (SL), and Glu116. The active-site N6-AMP-lysine intermediate is the Lys118. NAD(+) contacts are provided by Arg139, Glu180, Lys296, and Lys320. Zn(2+) is bound by residues Cys414, Cys417, Cys432, and Cys437. In terms of domain architecture, BRCT spans 597-675 (PVDAFWNGKT…EREFLERLGM (79 aa)).

Belongs to the NAD-dependent DNA ligase family. LigA subfamily. Mg(2+) serves as cofactor. Requires Mn(2+) as cofactor.

It carries out the reaction NAD(+) + (deoxyribonucleotide)n-3'-hydroxyl + 5'-phospho-(deoxyribonucleotide)m = (deoxyribonucleotide)n+m + AMP + beta-nicotinamide D-nucleotide.. Its function is as follows. DNA ligase that catalyzes the formation of phosphodiester linkages between 5'-phosphoryl and 3'-hydroxyl groups in double-stranded DNA using NAD as a coenzyme and as the energy source for the reaction. It is essential for DNA replication and repair of damaged DNA. This Syntrophobacter fumaroxidans (strain DSM 10017 / MPOB) protein is DNA ligase.